The primary structure comprises 614 residues: Zinc metalloproteinase-disintegrin-like protein F1 (614 aa).

The N-terminal stretch at 1–20 is a signal peptide; it reads MLQVLLVTICLAVFPYQGSS. Positions 21-192 are excised as a propeptide; that stretch reads IILESGNVND…IKASQFILTP (172 aa). Residues 167–173 carry the Cys-switch; controls maturation motif; it reads PKKCGVT. A Pyrrolidone carboxylic acid (Glu) modification is found at Glu-193. A Peptidase M12B domain is found at 202 to 398; the sequence is KYIKLAIVVD…HTPRCILNEP (197 aa). Residue Asn-221 is glycosylated (N-linked (GlcNAc...) asparagine). Cystine bridges form between Cys-313–Cys-393, Cys-353–Cys-377, and Cys-355–Cys-360. His-338 lines the Zn(2+) pocket. The Metal-binding signature appears at 338–349; that stretch reads HELGHNLGINHD. Glu-339 functions as the Proton acceptor in the catalytic mechanism. His-342 and His-348 together coordinate Zn(2+). The Disintegrin domain occupies 406–492; it reads PAVCGNYVVE…ECPMDHIQKN (87 aa). Val-408, Asn-411, Glu-415, Glu-418, and Asp-421 together coordinate Ca(2+). 14 cysteine pairs are disulfide-bonded: Cys-409-Cys-438, Cys-420-Cys-433, Cys-422-Cys-428, Cys-432-Cys-455, Cys-446-Cys-452, Cys-451-Cys-477, Cys-464-Cys-484, Cys-471-Cys-503, Cys-496-Cys-508, Cys-515-Cys-565, Cys-530-Cys-575, Cys-543-Cys-553, Cys-560-Cys-601, and Cys-595-Cys-607. A D/ECD-tripeptide motif is present at residues 470–472; it reads ECD. Ca(2+) contacts are provided by Asp-472, Glu-475, and Asp-487. Asn-534 carries N-linked (GlcNAc...) asparagine glycosylation.

It belongs to the venom metalloproteinase (M12B) family. P-III subfamily. P-IIIa sub-subfamily. Monomer. Zn(2+) is required as a cofactor. Post-translationally, N-glycosylated. The N-terminus is blocked. Expressed by the venom gland (at protein level). Expressed by the venom gland.

The protein resides in the secreted. The alpha-fibrinogenase activity is inhibited by EDTA, but not by pefabloc. Its function is as follows. Zinc metalloprotease that has fibrinogenolytic activity. Does not have hemorrhagic activity in rats. Cleaves insulin B chain at '38-Ala-|-Leu-39' and '40-Tyr-|-Leu-41' bonds. Hydrolyzes only partially and weakly isolated extracellular matrix (ECM) bovine fibronectin and basal membrane (BM) protein human collagen IV in vitro. Murine laminin is not hydrolyzed, neither isolated nor in a solubilized BM preparation. Nidogen is hydrolyzed at '350-Ser-|-Phe-351' bond in a solubilized BM preparation. Hydrolyzes plasma proteins involved in blood coagulation in vitro. Has alpha-fibrinogenase activity cleaving human fibrinogen alpha chain at '432-Lys-|-Leu-433' bond, but does not cleave beta or gamma chains. Does not cleave fibrin. Hydrolyzes only partially bovine prothrombin at '200-Ser-|-Gly-201' bond, factor X (FX) heavy chain, and very slowly, FX light chain and plasminogen in vitro, without activating any of them. Has no effect in plasma thrombin generation. Does not inhibit platelet aggregation induced by collagen in vitro. May have a delayed pathological action as an anticoagulant in envenomed patients after they received serotherapy as it is not recognized by the venom antiserum. The sequence is that of Zinc metalloproteinase-disintegrin-like protein F1 from Vipera ammodytes ammodytes (Western sand viper).